Reading from the N-terminus, the 78-residue chain is Large ribosomal subunit protein bL28 (78 aa).

The protein belongs to the bacterial ribosomal protein bL28 family.

The protein is Large ribosomal subunit protein bL28 of Tropheryma whipplei (strain TW08/27) (Whipple's bacillus).